A 487-amino-acid polypeptide reads, in one-letter code: Malonate-semialdehyde dehydrogenase 2 (487 aa).

5 residues coordinate NAD(+): phenylalanine 154, lysine 178, glutamate 181, arginine 182, and serine 231. Cysteine 286 acts as the Nucleophile in catalysis. Glutamate 386 lines the NAD(+) pocket.

It belongs to the aldehyde dehydrogenase family. IolA subfamily. In terms of assembly, homotetramer.

It carries out the reaction 3-oxopropanoate + NAD(+) + CoA + H2O = hydrogencarbonate + acetyl-CoA + NADH + H(+). The enzyme catalyses 2-methyl-3-oxopropanoate + NAD(+) + CoA + H2O = propanoyl-CoA + hydrogencarbonate + NADH + H(+). It functions in the pathway polyol metabolism; myo-inositol degradation into acetyl-CoA; acetyl-CoA from myo-inositol: step 7/7. Functionally, catalyzes the oxidation of malonate semialdehyde (MSA) and methylmalonate semialdehyde (MMSA) into acetyl-CoA and propanoyl-CoA, respectively. Is involved in a myo-inositol catabolic pathway. Bicarbonate, and not CO2, is the end-product of the enzymatic reaction. This chain is Malonate-semialdehyde dehydrogenase 2, found in Bacillus thuringiensis (strain Al Hakam).